The chain runs to 604 residues: Elongation factor 4 (604 aa).

The tr-type G domain maps to aspartate 9–alanine 191. GTP contacts are provided by residues aspartate 21–threonine 26 and asparagine 138–aspartate 141.

Belongs to the TRAFAC class translation factor GTPase superfamily. Classic translation factor GTPase family. LepA subfamily.

The protein resides in the cell inner membrane. The enzyme catalyses GTP + H2O = GDP + phosphate + H(+). Its function is as follows. Required for accurate and efficient protein synthesis under certain stress conditions. May act as a fidelity factor of the translation reaction, by catalyzing a one-codon backward translocation of tRNAs on improperly translocated ribosomes. Back-translocation proceeds from a post-translocation (POST) complex to a pre-translocation (PRE) complex, thus giving elongation factor G a second chance to translocate the tRNAs correctly. Binds to ribosomes in a GTP-dependent manner. The polypeptide is Elongation factor 4 (Prosthecochloris aestuarii (strain DSM 271 / SK 413)).